A 643-amino-acid chain; its full sequence is Phosphomethylpyrimidine synthase (643 aa).

Residues asparagine 248, methionine 277, tyrosine 306, histidine 342, serine 362 to glycine 364, aspartate 403 to arginine 406, and glutamate 442 contribute to the substrate site. Histidine 446 contributes to the Zn(2+) binding site. A substrate-binding site is contributed by tyrosine 469. Histidine 510 serves as a coordination point for Zn(2+). [4Fe-4S] cluster-binding residues include cysteine 590, cysteine 593, and cysteine 598.

The protein belongs to the ThiC family. In terms of assembly, homodimer. It depends on [4Fe-4S] cluster as a cofactor.

The catalysed reaction is 5-amino-1-(5-phospho-beta-D-ribosyl)imidazole + S-adenosyl-L-methionine = 4-amino-2-methyl-5-(phosphooxymethyl)pyrimidine + CO + 5'-deoxyadenosine + formate + L-methionine + 3 H(+). Its pathway is cofactor biosynthesis; thiamine diphosphate biosynthesis. Its function is as follows. Catalyzes the synthesis of the hydroxymethylpyrimidine phosphate (HMP-P) moiety of thiamine from aminoimidazole ribotide (AIR) in a radical S-adenosyl-L-methionine (SAM)-dependent reaction. This chain is Phosphomethylpyrimidine synthase, found in Paraburkholderia xenovorans (strain LB400).